A 283-amino-acid polypeptide reads, in one-letter code: MQILTDPRTLQQTCLRWRADGQHTVLVPTMGYYHSGHESLMSYARSVGDKVVVSLFVNPTQFGPGEDLAAYPRDLERDAALAEANGADILFTPQPADMFPAGHATWIEVPSLAGTLCGVSRPTHFRGVCTVVMKLFQLAMPRTAVFGQKDWQQLAIIRRMARDLNVPVDVVGRPIVREQDGLAMSSRNIYLSTEERAQAPNIHHGLALGRALVQGGERDAAAVAEAMRRYWRESLPLAQEDYISIVHPETLEPLARITDAALCAVAFRLGKARLIDNMLLAGE.

30-37 (MGYYHSGH) is an ATP binding site. The active-site Proton donor is the His37. (R)-pantoate is bound at residue Gln61. Residue Gln61 participates in beta-alanine binding. Position 147–150 (147–150 (GQKD)) interacts with ATP. Gln153 serves as a coordination point for (R)-pantoate. ATP-binding positions include Val176 and 184–187 (MSSR).

This sequence belongs to the pantothenate synthetase family. As to quaternary structure, homodimer.

It is found in the cytoplasm. It catalyses the reaction (R)-pantoate + beta-alanine + ATP = (R)-pantothenate + AMP + diphosphate + H(+). Its pathway is cofactor biosynthesis; (R)-pantothenate biosynthesis; (R)-pantothenate from (R)-pantoate and beta-alanine: step 1/1. Its function is as follows. Catalyzes the condensation of pantoate with beta-alanine in an ATP-dependent reaction via a pantoyl-adenylate intermediate. This Nitratidesulfovibrio vulgaris (strain DSM 19637 / Miyazaki F) (Desulfovibrio vulgaris) protein is Pantothenate synthetase.